The sequence spans 96 residues: C-C motif chemokine 1 (96 aa).

The first 23 residues, 1–23 (MQIITTALVCLLLAGMWPEDVDS), serve as a signal peptide directing secretion. Intrachain disulfides connect cysteine 33–cysteine 57, cysteine 34–cysteine 73, and cysteine 49–cysteine 91. An N-linked (GlcNAc...) asparagine glycan is attached at asparagine 52.

The protein belongs to the intercrine beta (chemokine CC) family. As to quaternary structure, monomer.

It localises to the secreted. Functionally, cytokine that is chemotactic for monocytes but not for neutrophils. Binds to CCR8. This Homo sapiens (Human) protein is C-C motif chemokine 1 (CCL1).